Consider the following 467-residue polypeptide: Transcription factor bHLH3 (467 aa).

Positions 316–365 (EEALNHVEAERQRREKLNQRFYALRAVVPNISKMDKASLLADAITYITDM) constitute a bHLH domain.

Homodimer.

It is found in the nucleus. The sequence is that of Transcription factor bHLH3 (BHLH3) from Arabidopsis thaliana (Mouse-ear cress).